We begin with the raw amino-acid sequence, 339 residues long: Putative NADP-dependent oxidoreductase YfmJ (339 aa).

Residues Gly156–Gly159, Lys182, Tyr198, Asn222, Cys244–Tyr250, Phe277–Val279, and Asn327 contribute to the NADP(+) site.

Belongs to the NADP-dependent oxidoreductase L4BD family.

Functionally, putative quinone oxidoreductase that may contribute to the degradation of aromatic compounds. This Bacillus subtilis (strain 168) protein is Putative NADP-dependent oxidoreductase YfmJ (yfmJ).